The chain runs to 203 residues: Large ribosomal subunit protein bL25 (203 aa).

It belongs to the bacterial ribosomal protein bL25 family. CTC subfamily. Part of the 50S ribosomal subunit; part of the 5S rRNA/L5/L18/L25 subcomplex. Contacts the 5S rRNA. Binds to the 5S rRNA independently of L5 and L18.

This is one of the proteins that binds to the 5S RNA in the ribosome where it forms part of the central protuberance. The chain is Large ribosomal subunit protein bL25 from Xanthobacter autotrophicus (strain ATCC BAA-1158 / Py2).